The chain runs to 84 residues: Putative membrane protein insertion efficiency factor (84 aa).

The protein belongs to the UPF0161 family.

It localises to the cell membrane. Its function is as follows. Could be involved in insertion of integral membrane proteins into the membrane. This chain is Putative membrane protein insertion efficiency factor, found in Staphylococcus carnosus (strain TM300).